A 211-amino-acid polypeptide reads, in one-letter code: Protein TMA23 (211 aa).

Residues 115-211 (ASFVVSSASS…SARRDRKEHI (97 aa)) are disordered. Residues 116-125 (SFVVSSASSS) show a composition bias toward low complexity. Composition is skewed to basic residues over residues 140-149 (VKRKKLKKDK), 158-176 (KKKK…KKSK), and 185-197 (SKHK…KKHK). A compositionally biased stretch (basic and acidic residues) spans 198–211 (KEESSARRDRKEHI).

Forms homooligomers. Associates with ribosomal complexes.

It localises to the nucleus. Its subcellular location is the nucleolus. Its function is as follows. Trans-acting factors of the ribosome biogenesis process. The sequence is that of Protein TMA23 (TMA23) from Saccharomyces cerevisiae (strain ATCC 204508 / S288c) (Baker's yeast).